The chain runs to 301 residues: Homoserine O-acetyltransferase (301 aa).

The active-site Acyl-thioester intermediate is C142. The substrate site is built by K163 and S192. Residue H235 is the Proton acceptor of the active site. Residue E237 is part of the active site. Residue R249 participates in substrate binding.

This sequence belongs to the MetA family.

It is found in the cytoplasm. The enzyme catalyses L-homoserine + acetyl-CoA = O-acetyl-L-homoserine + CoA. It functions in the pathway amino-acid biosynthesis; L-methionine biosynthesis via de novo pathway; O-acetyl-L-homoserine from L-homoserine: step 1/1. Its function is as follows. Transfers an acetyl group from acetyl-CoA to L-homoserine, forming acetyl-L-homoserine. This chain is Homoserine O-acetyltransferase, found in Bacillus cytotoxicus (strain DSM 22905 / CIP 110041 / 391-98 / NVH 391-98).